A 129-amino-acid chain; its full sequence is Trefoil factor 2 (129 aa).

The signal sequence occupies residues 1 to 23 (MGPRGAPLLAVVLVLGLHALVEG). 2 P-type domains span residues 29–73 (CRCS…FHPL) and 79–122 (EQCV…FFPQ). Intrachain disulfides connect C29–C127, C31–C58, C42–C57, C52–C69, C81–C107, C91–C106, and C101–C118.

In terms of tissue distribution, stomach and pancreas.

It localises to the secreted. Functionally, inhibits gastrointestinal motility and gastric acid secretion. Could function as a structural component of gastric mucus, possibly by stabilizing glycoproteins in the mucus gel through interactions with carbohydrate side chains. The sequence is that of Trefoil factor 2 (Tff2) from Mus musculus (Mouse).